The primary structure comprises 140 residues: Large ribosomal subunit protein uL14 (140 aa).

Belongs to the universal ribosomal protein uL14 family. Part of the 50S ribosomal subunit. Forms a cluster with proteins L3 and L24e, part of which may contact the 16S rRNA in 2 intersubunit bridges.

Its function is as follows. Binds to 23S rRNA. Forms part of two intersubunit bridges in the 70S ribosome. This is Large ribosomal subunit protein uL14 from Staphylothermus marinus (strain ATCC 43588 / DSM 3639 / JCM 9404 / F1).